We begin with the raw amino-acid sequence, 152 residues long: Transcriptional regulator MraZ (152 aa).

2 SpoVT-AbrB domains span residues 5–52 (ATLV…PLPE) and 81–124 (ASEC…DEQT).

It belongs to the MraZ family. In terms of assembly, forms oligomers.

The protein localises to the cytoplasm. Its subcellular location is the nucleoid. Functionally, negatively regulates its own expression and that of the subsequent genes in the proximal part of the division and cell wall (dcw) gene cluster. Acts by binding directly to DNA. May also regulate the expression of genes outside the dcw cluster. This chain is Transcriptional regulator MraZ, found in Erwinia tasmaniensis (strain DSM 17950 / CFBP 7177 / CIP 109463 / NCPPB 4357 / Et1/99).